The chain runs to 614 residues: Zinc finger and SCAN domain-containing protein 2 (614 aa).

Disordered regions lie at residues 1 to 25, 42 to 73, and 162 to 200; these read MAAE…EDEQ, AVLQ…EGPQ, and NISG…RVVP. Residues 69–127 enclose the SCAN box domain; it reads AEGPQGALVRFRELCRRWLRPEVHTKEQMLTVLPREIQAWLQEHRPESSEEAVALVEDL. 14 consecutive C2H2-type zinc fingers follow at residues 222-244, 250-272, 278-300, 306-328, 334-356, 362-384, 390-412, 418-440, 446-468, 474-496, 502-524, 530-552, 558-580, and 586-608; these read YECP…ERTH, YKCD…QTTH, YKCR…QRIH, FQCA…QRTH, YSCP…QGIH, YACK…QRIH, YKCT…RRTH, YQCG…RRTH, YKCG…QGTH, YECL…QRTH, YRCG…QRTH, YKCL…QRAH, YRCP…QRIH, and YRCP…QRTH.

Belongs to the krueppel C2H2-type zinc-finger protein family. As to expression, in the adult, predominantly found in spermatids. Also present in the embryo.

It is found in the nucleus. Functionally, may be involved in transcriptional regulation during the post-meiotic stages of spermatogenesis. The protein is Zinc finger and SCAN domain-containing protein 2 (Zscan2) of Mus musculus (Mouse).